We begin with the raw amino-acid sequence, 92 residues long: Small ribosomal subunit protein uS19 (92 aa).

It belongs to the universal ribosomal protein uS19 family.

In terms of biological role, protein S19 forms a complex with S13 that binds strongly to the 16S ribosomal RNA. The sequence is that of Small ribosomal subunit protein uS19 from Anoxybacillus flavithermus (strain DSM 21510 / WK1).